Consider the following 844-residue polypeptide: Beta-mannosidase B (844 aa).

The active-site Proton donor is the Glu432. The N-linked (GlcNAc...) asparagine glycan is linked to Asn723.

This sequence belongs to the glycosyl hydrolase 2 family. Beta-mannosidase B subfamily.

The enzyme catalyses Hydrolysis of terminal, non-reducing beta-D-mannose residues in beta-D-mannosides.. It participates in glycan metabolism; N-glycan degradation. In terms of biological role, exoglycosidase that cleaves the single beta-linked mannose residue from the non-reducing end of beta-mannosidic oligosaccharides of various complexity and length. Prefers mannobiose over mannotriose and has no activity against polymeric mannan. Is also severely restricted by galactosyl substitutions at the +1 subsite. The protein is Beta-mannosidase B (mndB) of Aspergillus flavus (strain ATCC 200026 / FGSC A1120 / IAM 13836 / NRRL 3357 / JCM 12722 / SRRC 167).